The sequence spans 530 residues: Per os infectivity factor 1 (530 aa).

An N-terminal signal peptide occupies residues 1-15 (MHFAIILLFLLVIIA).

Forms the PIF complex together with PIF2 and PIF3. The complex also interacts with per os infectivity factor PIF0.

Its subcellular location is the virion membrane. In terms of biological role, per os infectivity factor that mediates the specific binding of occluded virions (ODV) to the host midgut target cells. The chain is Per os infectivity factor 1 from Autographa californica nuclear polyhedrosis virus (AcMNPV).